Here is a 128-residue protein sequence, read N- to C-terminus: Fluoride-specific ion channel FluC (128 aa).

A run of 4 helical transmembrane segments spans residues 5–25 (ALVA…SMVI), 32–52 (TFPW…GLFA), 70–90 (FFMV…LQTL), and 106–126 (VGSV…ATII). Gly77 and Thr80 together coordinate Na(+).

The protein belongs to the fluoride channel Fluc/FEX (TC 1.A.43) family.

It is found in the cell inner membrane. The enzyme catalyses fluoride(in) = fluoride(out). With respect to regulation, na(+) is not transported, but it plays an essential structural role and its presence is essential for fluoride channel function. Fluoride-specific ion channel. Important for reducing fluoride concentration in the cell, thus reducing its toxicity. In Paramagnetospirillum magneticum (strain ATCC 700264 / AMB-1) (Magnetospirillum magneticum), this protein is Fluoride-specific ion channel FluC.